The primary structure comprises 233 residues: MELLRTVSDTKRTFYALHTRPINTIYRRVVEELMVEMHLLSVNVDFSYNPIYALGVVTTFDRFMEGYQPERDKESIFSAICQAVEQEPQRYRQDAERLQAVAQSLPVNDLVAWLSQANHLQQDADLQAQLQAIANNSNFKYSRLFAIGLFTLLEQSNPDLVKDEKQRTEALKSIAAGLHLSDDKFSKDLELYRSNLDKMTQALAVMADMLTADRKKREQRQQQASTPVAPPNE.

Positions 183 to 204 (DKFSKDLELYRSNLDKMTQALA) form a coiled coil. Positions 212–233 (ADRKKREQRQQQASTPVAPPNE) are disordered.

The protein belongs to the THF1 family.

Functionally, may be involved in photosynthetic membrane biogenesis. In Nostoc sp. (strain PCC 7120 / SAG 25.82 / UTEX 2576), this protein is Protein Thf1.